The chain runs to 329 residues: Chlorophyllase-1, chloroplastic (329 aa).

Residues 1–21 (MAAMVDAKPAASVQGTPLLAT) constitute a chloroplast transit peptide. The GXSXG motif lies at 145–149 (GHSRG). Residue Ser147 is the Nucleophile of the active site. Active-site charge relay system residues include Asp169 and His242.

This sequence belongs to the AB hydrolase superfamily. Lipase family.

The protein resides in the plastid. Its subcellular location is the chloroplast. It catalyses the reaction a chlorophyll + H2O = a chlorophyllide + phytol + H(+). Its pathway is porphyrin-containing compound metabolism; chlorophyll degradation. Its function is as follows. Catalyzes the hydrolysis of ester bond in chlorophyll to yield chlorophyllide and phytol. This chain is Chlorophyllase-1, chloroplastic (CHLASE1), found in Citrus sinensis (Sweet orange).